Reading from the N-terminus, the 241-residue chain is DnaA regulatory inactivator Hda (241 aa).

It belongs to the DnaA family. HdA subfamily. The active form seems to be an ADP-bound monomer. Forms the RIDA complex (regulatory inactivation of DnaA) of ATP-DnaA, ADP-Hda and the DNA-loaded beta sliding clamp (dnaN).

Its function is as follows. Mediates the interaction of DNA replication initiator protein DnaA with DNA polymerase subunit beta sliding clamp (dnaN). Stimulates hydrolysis of ATP-DnaA to ADP-DnaA, rendering DnaA inactive for reinitiation, a process called regulatory inhibition of DnaA or RIDA. In Salmonella agona (strain SL483), this protein is DnaA regulatory inactivator Hda.